Reading from the N-terminus, the 114-residue chain is MTVLLVALGGALGATTRYLTGRYVDSYRSFPVATFLVNVAGCLILGLLSGASLSEQTFALLGTGFCGGLTTYSTFAVESVGLLRIRRALPSVVYVVASVAAGLAAAWLGFRLTS.

3 helical membrane-spanning segments follow: residues 30–50, 57–77, and 88–108; these read FPVA…LLSG, TFAL…TFAV, and ALPS…AAWL. The Na(+) site is built by Gly-67 and Thr-70.

The protein belongs to the fluoride channel Fluc/FEX (TC 1.A.43) family.

The protein resides in the cell membrane. It carries out the reaction fluoride(in) = fluoride(out). Na(+) is not transported, but it plays an essential structural role and its presence is essential for fluoride channel function. Its function is as follows. Fluoride-specific ion channel. Important for reducing fluoride concentration in the cell, thus reducing its toxicity. This is Fluoride-specific ion channel FluC 2 from Rhodococcus jostii (strain RHA1).